A 117-amino-acid polypeptide reads, in one-letter code: Large ribosomal subunit protein bL20c (117 aa).

It belongs to the bacterial ribosomal protein bL20 family.

It localises to the plastid. Its subcellular location is the chloroplast. Its function is as follows. Binds directly to 23S ribosomal RNA and is necessary for the in vitro assembly process of the 50S ribosomal subunit. It is not involved in the protein synthesizing functions of that subunit. In Lobularia maritima (Sweet alyssum), this protein is Large ribosomal subunit protein bL20c.